Consider the following 314-residue polypeptide: MANSIQDALYLSFEREQWAELRKSVPLTLSEAELTQLKGMNEKLSLDEVTDIYLPLSRLLNLIVGAKQQRGLVIDKFLSQQAPKSPYIISIAGSVAVGKSTTARILQTLLQRWPEHPKVDLVTTDGFLYPLAELKRKGLLQRKGFPESYDTKLLGEFISAVKSGDNNVKVPLYSHITYDRLTDQHQVIAQPDIIILEGLNVLQTGLDTLVETRRPFVSDFVDFSIYVDADESLLKDWYQQRFLQFRHGAFNDPRSFFHHYATLSDGEANAIAANIWDTINGPNLQLNIQPTRERAKLILKKGKDHLISQVLMRR.

93 to 100 (GSVAVGKS) serves as a coordination point for ATP.

Belongs to the prokaryotic pantothenate kinase family.

The protein resides in the cytoplasm. The enzyme catalyses (R)-pantothenate + ATP = (R)-4'-phosphopantothenate + ADP + H(+). The protein operates within cofactor biosynthesis; coenzyme A biosynthesis; CoA from (R)-pantothenate: step 1/5. In Shewanella denitrificans (strain OS217 / ATCC BAA-1090 / DSM 15013), this protein is Pantothenate kinase.